The primary structure comprises 414 residues: Gamma-glutamyl phosphate reductase (414 aa).

The protein belongs to the gamma-glutamyl phosphate reductase family.

The protein localises to the cytoplasm. It carries out the reaction L-glutamate 5-semialdehyde + phosphate + NADP(+) = L-glutamyl 5-phosphate + NADPH + H(+). It participates in amino-acid biosynthesis; L-proline biosynthesis; L-glutamate 5-semialdehyde from L-glutamate: step 2/2. Functionally, catalyzes the NADPH-dependent reduction of L-glutamate 5-phosphate into L-glutamate 5-semialdehyde and phosphate. The product spontaneously undergoes cyclization to form 1-pyrroline-5-carboxylate. This chain is Gamma-glutamyl phosphate reductase, found in Caldanaerobacter subterraneus subsp. tengcongensis (strain DSM 15242 / JCM 11007 / NBRC 100824 / MB4) (Thermoanaerobacter tengcongensis).